A 172-amino-acid chain; its full sequence is MQLHMNLPTSRIAAGASINVRPAPLLRTAAPKRVCKHIVRAENNPSTPPPSSPSPPPPPPTPAAPTVTEVMGFSGAPEIINGRLAMLGFVAALGAELSTGESVLTQLGDQPTLIALTFVLFSAASLIPAFARRKGDAMGPFTPDAEMTNGRFAMIGFAAMLVYEGIQGIALF.

Residues 41–66 (AENNPSTPPPSSPSPPPPPPTPAAPT) are disordered. A compositionally biased stretch (pro residues) spans 46–63 (STPPPSSPSPPPPPPTPA). The next 2 helical transmembrane spans lie at 111–131 (PTLIALTFVLFSAASLIPAFA) and 152–172 (FAMIGFAAMLVYEGIQGIALF).

This sequence belongs to the ELIP/psbS family.

It localises to the plastid. The protein localises to the chloroplast membrane. Its function is as follows. Putative zeaxanthin binding protein. That forms photoprotective complexes within the light-harvesting antennae. This Dunaliella salina (Green alga) protein is Carotene biosynthesis-related protein CBR, chloroplastic (CBR).